Here is a 130-residue protein sequence, read N- to C-terminus: Small ribosomal subunit protein uS8 (130 aa).

This sequence belongs to the universal ribosomal protein uS8 family. In terms of assembly, part of the 30S ribosomal subunit. Contacts proteins S5 and S12.

Functionally, one of the primary rRNA binding proteins, it binds directly to 16S rRNA central domain where it helps coordinate assembly of the platform of the 30S subunit. The chain is Small ribosomal subunit protein uS8 from Pseudomonas fluorescens (strain ATCC BAA-477 / NRRL B-23932 / Pf-5).